We begin with the raw amino-acid sequence, 313 residues long: Jacalin-related lectin 8 (313 aa).

The first 23 residues, 1–23 (MFIIYLFIFLSSAIIDSNGVAMA), serve as a signal peptide directing secretion. 2 Jacalin-type lectin domains span residues 24-163 (QKIE…YVKT) and 165-309 (PTKS…YFSP).

Belongs to the jacalin lectin family.

This Arabidopsis thaliana (Mouse-ear cress) protein is Jacalin-related lectin 8 (JAL8).